The sequence spans 85 residues: UPF0386 protein Bind_1628 (85 aa).

The protein belongs to the UPF0386 family.

The protein is UPF0386 protein Bind_1628 of Beijerinckia indica subsp. indica (strain ATCC 9039 / DSM 1715 / NCIMB 8712).